The sequence spans 442 residues: uncharacterized protein (442 aa).

A run of 7 helical transmembrane segments spans residues 209 to 229, 247 to 267, 284 to 304, 308 to 328, 342 to 362, 374 to 394, and 402 to 422; these read FNIW…AYFY, IFFL…HTFS, VGIS…AFVC, LRFI…YTPW, IFFF…MFYI, PVFK…LHIP, and FDII…GVAF.

The protein localises to the membrane. This is an uncharacterized protein from Schizosaccharomyces pombe (strain 972 / ATCC 24843) (Fission yeast).